Here is a 364-residue protein sequence, read N- to C-terminus: Ferrochelatase (364 aa).

Residues His-210 and Glu-291 each coordinate Fe cation.

This sequence belongs to the ferrochelatase family.

Its subcellular location is the cytoplasm. It catalyses the reaction heme b + 2 H(+) = protoporphyrin IX + Fe(2+). The protein operates within porphyrin-containing compound metabolism; protoheme biosynthesis; protoheme from protoporphyrin-IX: step 1/1. In terms of biological role, catalyzes the ferrous insertion into protoporphyrin IX. This chain is Ferrochelatase, found in Idiomarina loihiensis (strain ATCC BAA-735 / DSM 15497 / L2-TR).